A 377-amino-acid polypeptide reads, in one-letter code: Methylthioribose-1-phosphate isomerase (377 aa).

D254 acts as the Proton donor in catalysis.

This sequence belongs to the eIF-2B alpha/beta/delta subunits family. MtnA subfamily.

Its subcellular location is the cytoplasm. The protein localises to the nucleus. The enzyme catalyses 5-(methylsulfanyl)-alpha-D-ribose 1-phosphate = 5-(methylsulfanyl)-D-ribulose 1-phosphate. The protein operates within amino-acid biosynthesis; L-methionine biosynthesis via salvage pathway; L-methionine from S-methyl-5-thio-alpha-D-ribose 1-phosphate: step 1/6. In terms of biological role, catalyzes the interconversion of methylthioribose-1-phosphate (MTR-1-P) into methylthioribulose-1-phosphate (MTRu-1-P). This chain is Methylthioribose-1-phosphate isomerase (mri1), found in Aspergillus terreus (strain NIH 2624 / FGSC A1156).